A 479-amino-acid polypeptide reads, in one-letter code: Anaerobic nitric oxide reductase flavorubredoxin (479 aa).

Residues 30 to 210 are zinc metallo-hydrolase; that stretch reads LRGSSYNSYL…PFSRLVTPKI (181 aa). Residues His79, Glu81, Asp83, His147, Asp166, and His227 each contribute to the Fe cation site. One can recognise a Flavodoxin-like domain in the interval 254 to 393; sequence ITIFYDTMSN…LCREHGREIA (140 aa). FMN is bound by residues 260-264 and 342-369; these read TMSNN and AFGSHGWSGGAMDRLSTRLQDAGFEMSL. A Rubredoxin-like domain is found at 423–474; it reads GPRMQCSVCQWIYDPAKGEPMQDVAPGTPWSEVPDNFLCPECSLGKDVFDEL. Fe cation contacts are provided by Cys428, Cys431, Cys461, and Cys464.

This sequence in the N-terminal section; belongs to the zinc metallo-hydrolase group 3 family. Homotetramer. Fe cation is required as a cofactor. It depends on FMN as a cofactor.

It is found in the cytoplasm. Its pathway is nitrogen metabolism; nitric oxide reduction. Functionally, anaerobic nitric oxide reductase; uses NADH to detoxify nitric oxide (NO), protecting several 4Fe-4S NO-sensitive enzymes. Has at least 2 reductase partners, only one of which (NorW, flavorubredoxin reductase) has been identified. NO probably binds to the di-iron center; electrons enter from the NorW at rubredoxin and are transferred sequentially to the FMN center and the di-iron center. Also able to function as an aerobic oxygen reductase. This chain is Anaerobic nitric oxide reductase flavorubredoxin, found in Shigella flexneri serotype 5b (strain 8401).